Here is a 261-residue protein sequence, read N- to C-terminus: Cytochrome c oxidase subunit 3 (261 aa).

The Mitochondrial matrix segment spans residues 1–15 (MTHQTHAYHMVNPSP). The chain crosses the membrane as a helical span at residues 16–34 (WPLTGALSALLMTSGLAMW). Residues 35 to 40 (FHFNSP) are Mitochondrial intermembrane-facing. Residues 41–66 (SLLLIGLVTNTLTMYQWWRDIVREGT) traverse the membrane as a helical segment. Residues 67 to 72 (FQGHHT) lie on the Mitochondrial matrix side of the membrane. A helical membrane pass occupies residues 73-105 (PIVQKGLRYGMILFIISEVFFFAGFFWAFYHSS). Residues 106-128 (LAPTPELGGCWPPTGINPLNPLE) are Mitochondrial intermembrane-facing. A helical transmembrane segment spans residues 129-152 (VPLLNTSVLLASGVSITWAHHSLM). Residues 153–155 (EGN) are Mitochondrial matrix-facing. A helical transmembrane segment spans residues 156-183 (RKNMQQALAITILLGIYFTLLQASEYYE). The Mitochondrial intermembrane portion of the chain corresponds to 184–190 (TSFTISD). A helical transmembrane segment spans residues 191-223 (GVYGSTFFMATGFHGLHVIIGSTFLTVCLLRQF). Over 224 to 232 (NFHFTSNHH) the chain is Mitochondrial matrix. A helical transmembrane segment spans residues 233–256 (FGFEAAAWYWHFVDVVWLFLYVSI). The Mitochondrial intermembrane portion of the chain corresponds to 257 to 261 (YWWGS).

It belongs to the cytochrome c oxidase subunit 3 family. As to quaternary structure, component of the cytochrome c oxidase (complex IV, CIV), a multisubunit enzyme composed of 14 subunits. The complex is composed of a catalytic core of 3 subunits MT-CO1, MT-CO2 and MT-CO3, encoded in the mitochondrial DNA, and 11 supernumerary subunits COX4I, COX5A, COX5B, COX6A, COX6B, COX6C, COX7A, COX7B, COX7C, COX8 and NDUFA4, which are encoded in the nuclear genome. The complex exists as a monomer or a dimer and forms supercomplexes (SCs) in the inner mitochondrial membrane with NADH-ubiquinone oxidoreductase (complex I, CI) and ubiquinol-cytochrome c oxidoreductase (cytochrome b-c1 complex, complex III, CIII), resulting in different assemblies (supercomplex SCI(1)III(2)IV(1) and megacomplex MCI(2)III(2)IV(2)).

The protein localises to the mitochondrion inner membrane. The enzyme catalyses 4 Fe(II)-[cytochrome c] + O2 + 8 H(+)(in) = 4 Fe(III)-[cytochrome c] + 2 H2O + 4 H(+)(out). Its function is as follows. Component of the cytochrome c oxidase, the last enzyme in the mitochondrial electron transport chain which drives oxidative phosphorylation. The respiratory chain contains 3 multisubunit complexes succinate dehydrogenase (complex II, CII), ubiquinol-cytochrome c oxidoreductase (cytochrome b-c1 complex, complex III, CIII) and cytochrome c oxidase (complex IV, CIV), that cooperate to transfer electrons derived from NADH and succinate to molecular oxygen, creating an electrochemical gradient over the inner membrane that drives transmembrane transport and the ATP synthase. Cytochrome c oxidase is the component of the respiratory chain that catalyzes the reduction of oxygen to water. Electrons originating from reduced cytochrome c in the intermembrane space (IMS) are transferred via the dinuclear copper A center (CU(A)) of subunit 2 and heme A of subunit 1 to the active site in subunit 1, a binuclear center (BNC) formed by heme A3 and copper B (CU(B)). The BNC reduces molecular oxygen to 2 water molecules using 4 electrons from cytochrome c in the IMS and 4 protons from the mitochondrial matrix. The chain is Cytochrome c oxidase subunit 3 (MT-CO3) from Oryctolagus cuniculus (Rabbit).